We begin with the raw amino-acid sequence, 327 residues long: E3 ubiquitin-protein ligase ZNRF4 (327 aa).

The N-terminal stretch at 1–28 is a signal peptide; that stretch reads MARFAWTRVAPVALVTFWLVLSLSPTDA. Over 29–150 the chain is Lumenal; it reads QVNLSSVDFL…EPCPDPECHP (122 aa). An N-linked (GlcNAc...) asparagine glycan is attached at Asn-31. A helical membrane pass occupies residues 151–171; that stretch reads VVVASWALARALALAASTLFV. Residues 172-327 are Cytoplasmic-facing; that stretch reads LRQLWPWVRG…AQSEATSELS (156 aa). The RING-type; atypical zinc finger occupies 209–252; it reads CAICLDDYEEGERLKILPCAHAYHCRCIDPWFSRAAQRSCPLCK. The segment covering 256–265 has biased composition (polar residues); the sequence is ASTHDGSTDG. The interval 256-279 is disordered; that stretch reads ASTHDGSTDGSVGGEEPPLPGHRP.

As to quaternary structure, interacts with CANX. In terms of tissue distribution, expressed exclusively in spermatids (at protein level).

It is found in the endoplasmic reticulum membrane. The catalysed reaction is S-ubiquitinyl-[E2 ubiquitin-conjugating enzyme]-L-cysteine + [acceptor protein]-L-lysine = [E2 ubiquitin-conjugating enzyme]-L-cysteine + N(6)-ubiquitinyl-[acceptor protein]-L-lysine.. The protein operates within protein modification; protein ubiquitination. E3 ubiquitin-protein ligase that acts as a negative regulator of NOD2 signaling by mediating ubiquitination and degradation of RIPK2. Also catalyzes ubiquitination and proteasomal degradation of CANX within the endoplasmic reticulum. Could have a role in spermatogenesis. The protein is E3 ubiquitin-protein ligase ZNRF4 of Mus musculus (Mouse).